Reading from the N-terminus, the 106-residue chain is Large ribosomal subunit protein uL24 (106 aa).

The protein belongs to the universal ribosomal protein uL24 family. As to quaternary structure, part of the 50S ribosomal subunit.

Its function is as follows. One of two assembly initiator proteins, it binds directly to the 5'-end of the 23S rRNA, where it nucleates assembly of the 50S subunit. In terms of biological role, one of the proteins that surrounds the polypeptide exit tunnel on the outside of the subunit. This Clostridium tetani (strain Massachusetts / E88) protein is Large ribosomal subunit protein uL24.